A 104-amino-acid chain; its full sequence is Large ribosomal subunit protein bL21 (104 aa).

This sequence belongs to the bacterial ribosomal protein bL21 family. In terms of assembly, part of the 50S ribosomal subunit. Contacts protein L20.

Functionally, this protein binds to 23S rRNA in the presence of protein L20. This is Large ribosomal subunit protein bL21 from Pseudomonas entomophila (strain L48).